The primary structure comprises 299 residues: Leucine zipper transcription factor-like protein 1 (299 aa).

A coiled-coil region spans residues 96-299; the sequence is LKLQTDISEL…KRLAKYESED (204 aa). The tract at residues 145–299 is interaction with BSS9; sequence GTTELLNKEI…KRLAKYESED (155 aa).

It belongs to the LZTFL1 family. As to quaternary structure, self-associates. Interacts with BBS9; the interaction mediates the association of LZTL1 with the BBsome complex and regulates BBSome ciliary trafficking. Highly expressed in testis. Expressed in brain, cerebellum, eye, heart, kidney, liver, lung and trachea. In small intestine, graded expression along the crypt-villus axis with high levels in the villus apex and lower levels in the crypt stem cells (at protein level). Not expressed in skeletal muscle and white adipose tissue.

The protein localises to the cytoplasm. Its function is as follows. Regulates ciliary localization of the BBSome complex. Together with the BBSome complex, controls SMO ciliary trafficking and contributes to the sonic hedgehog (SHH) pathway regulation. May play a role in neurite outgrowth. May have tumor suppressor function. The sequence is that of Leucine zipper transcription factor-like protein 1 (Lztfl1) from Mus musculus (Mouse).